The sequence spans 96 residues: U-reduvitoxin-Pr12a (96 aa).

The first 20 residues, 1–20 (MKTALLLFFALVFIAFETEA), serve as a signal peptide directing secretion. 3 cysteine pairs are disulfide-bonded: cysteine 21–cysteine 38, cysteine 33–cysteine 53, and cysteine 36–cysteine 47. Pacifastin domains lie at 21 to 55 (CRPG…ICPP) and 59 to 94 (KLEC…CIHK). Positions 54 to 56 (PPR) are pro-Pro-Arg motif necessary for proteolytic processing. 3 cysteine pairs are disulfide-bonded: cysteine 62/cysteine 77, cysteine 72/cysteine 91, and cysteine 75/cysteine 86.

It belongs to the protease inhibitor I19 family. In terms of tissue distribution, expressed by the venom gland.

It is found in the secreted. Inhibits trypsin activity and prophenoloxidase (PPO) activation, an enzyme essential for both clotting and insect innate immune responses. It does not inhibit activity of chymotrypsin and protease K, and has no effect on phenoloxidase (PO) activity. This is U-reduvitoxin-Pr12a from Platymeris rhadamanthus (Red spot assassin bug).